Reading from the N-terminus, the 554-residue chain is Acurin A biosynthesis cluster MFS-type transporter (554 aa).

5 consecutive transmembrane segments (helical) span residues 24–44 (WLIF…TSII), 60–80 (LYIW…AIVG), 96–116 (LLIF…GMLL), 123–143 (GLGG…MVSL), and 151–171 (GILG…GGGF). An N-linked (GlcNAc...) asparagine glycan is attached at N174. 3 helical membrane passes run 179 to 199 (WIFY…VTLL), 219 to 239 (WGGI…LTWA), and 251 to 271 (IVPL…EALP). N283 carries an N-linked (GlcNAc...) asparagine glycan. The next 6 helical transmembrane spans lie at 289 to 309 (LFVM…FLPI), 324 to 344 (VMLF…GILM), 352 to 372 (SFQY…TLLD), 385 to 405 (ILFG…ILAS), 417 to 437 (TWIF…AAVF), and 496 to 516 (VWQV…LVKA).

The protein belongs to the major facilitator superfamily.

It localises to the membrane. Its function is as follows. MFS-type transporter that may have a role in the biosynthesis of acurin A, a highly reduced polyketide coupled to a serine via a peptide bond; either in extra- or intracellular transport. The chain is Acurin A biosynthesis cluster MFS-type transporter from Aspergillus aculeatus (strain ATCC 16872 / CBS 172.66 / WB 5094).